Reading from the N-terminus, the 202-residue chain is B-cell CLL/lymphoma 7 protein family member B (202 aa).

The disordered stretch occupies residues 53–202; the sequence is DSKEKEKSKS…PVVPQTTSES (150 aa). Positions 90–99 are enriched in polar residues; the sequence is ENSNQSSVSD. The span at 107-123 shows a compositional bias: low complexity; sequence SSTNSSPSPQQSESLSP. Phosphoserine occurs at positions 114, 118, 120, 122, 127, 148, and 152.

The protein belongs to the BCL7 family.

Positive regulator of apoptosis. Plays a role in the Wnt signaling pathway, negatively regulating the expression of Wnt signaling components CTNNB1 and HMGA1. Involved in cell cycle progression, maintenance of the nuclear structure and stem cell differentiation. May play a role in lung tumor development or progression. The protein is B-cell CLL/lymphoma 7 protein family member B (Bcl7b) of Mus musculus (Mouse).